The primary structure comprises 238 residues: Uridylate kinase (238 aa).

12 to 15 is an ATP binding site; that stretch reads KLSG. Residues 20–25 are involved in allosteric activation by GTP; the sequence is GEKGFG. Position 54 (G54) interacts with UMP. ATP is bound by residues G55 and R59. UMP-binding positions include D72 and 133 to 140; that span reads TGNPYFST. 2 residues coordinate ATP: Y166 and D169.

The protein belongs to the UMP kinase family. As to quaternary structure, homohexamer.

The protein localises to the cytoplasm. It carries out the reaction UMP + ATP = UDP + ADP. It functions in the pathway pyrimidine metabolism; CTP biosynthesis via de novo pathway; UDP from UMP (UMPK route): step 1/1. Allosterically activated by GTP. Inhibited by UTP. Catalyzes the reversible phosphorylation of UMP to UDP. The chain is Uridylate kinase from Clostridium botulinum (strain Hall / ATCC 3502 / NCTC 13319 / Type A).